The primary structure comprises 322 residues: Lignin-forming anionic peroxidase (322 aa).

The signal sequence occupies residues 1–27; sequence MNTPTQSFRAKAAIFSLLLLSCMQCHA. A Pyrrolidone carboxylic acid modification is found at glutamine 28. Disulfide bonds link cysteine 38/cysteine 118, cysteine 71/cysteine 76, cysteine 124/cysteine 318, and cysteine 203/cysteine 229. Residue histidine 69 is the Proton acceptor of the active site. Ca(2+) contacts are provided by aspartate 70, valine 73, glycine 75, aspartate 77, and serine 79. Position 166 (proline 166) interacts with substrate. Histidine 196 lines the heme b pocket. Position 197 (threonine 197) interacts with Ca(2+). Residue asparagine 213 is glycosylated (N-linked (GlcNAc...) asparagine). Ca(2+) is bound by residues aspartate 242, threonine 245, and aspartate 250.

The protein belongs to the peroxidase family. Classical plant (class III) peroxidase subfamily. Ca(2+) serves as cofactor. The cofactor is heme b. In terms of tissue distribution, mesophyll protoplasts and to a much lesser extent, roots and germinating seeds.

The protein localises to the secreted. The enzyme catalyses 2 a phenolic donor + H2O2 = 2 a phenolic radical donor + 2 H2O. Its function is as follows. Removal of H(2)O(2), oxidation of toxic reductants, biosynthesis and degradation of lignin, suberization, auxin catabolism, response to environmental stresses such as wounding, pathogen attack and oxidative stress. These functions might be dependent on each isozyme/isoform in each plant tissue. Functionally, plays an integral role in secondary cell wall biosynthesis by the polymerization of cinnamyl alcohols into lignin and by forming rigid cross-links between cellulose, pectin, hydroxy-proline-rich glycoproteins, and lignin. In Nicotiana sylvestris (Wood tobacco), this protein is Lignin-forming anionic peroxidase.